Here is a 288-residue protein sequence, read N- to C-terminus: uncharacterized protein (288 aa).

Residues lysine 107–alanine 288 form the ATP-grasp domain. ATP contacts are provided by residues lysine 145 and glutamine 178–alanine 188. Residues aspartate 248, glutamate 261, and asparagine 263 each coordinate Mg(2+). Mn(2+) is bound by residues aspartate 248, glutamate 261, and asparagine 263.

The protein belongs to the RimK family.

This is an uncharacterized protein from Mycoplasma pneumoniae (strain ATCC 29342 / M129 / Subtype 1) (Mycoplasmoides pneumoniae).